The sequence spans 100 residues: Urease subunit gamma (100 aa).

Belongs to the urease gamma subunit family. As to quaternary structure, heterotrimer of UreA (gamma), UreB (beta) and UreC (alpha) subunits. Three heterotrimers associate to form the active enzyme.

It is found in the cytoplasm. It catalyses the reaction urea + 2 H2O + H(+) = hydrogencarbonate + 2 NH4(+). Its pathway is nitrogen metabolism; urea degradation; CO(2) and NH(3) from urea (urease route): step 1/1. In Corynebacterium glutamicum (strain R), this protein is Urease subunit gamma.